A 262-amino-acid chain; its full sequence is Small ribosomal subunit protein mS23 (262 aa).

The segment covering 242–254 (AAEEQETSLDDDA) has biased composition (acidic residues). Residues 242–262 (AAEEQETSLDDDATEKVAVAA) form a disordered region.

The protein belongs to the mitochondrion-specific ribosomal protein mS23 family. Component of the mitochondrial small ribosomal subunit.

The protein localises to the mitochondrion. The protein is Small ribosomal subunit protein mS23 (rsm25) of Aspergillus niger (strain ATCC MYA-4892 / CBS 513.88 / FGSC A1513).